Reading from the N-terminus, the 126-residue chain is Histone H2B 1.1 (126 aa).

Positions 1 to 12 (MPEPAKSAPAPK) are enriched in low complexity. Positions 1 to 35 (MPEPAKSAPAPKKGSKKAVTKTQKKDGKKRRKSRK) are disordered. N6-acetyllysine is present on residues K6 and K13. A Phosphoserine modification is found at S15. Residues K16 and K21 each carry the N6-acetyllysine modification. S113 is a glycosylation site (O-linked (GlcNAc) serine). K121 participates in a covalent cross-link: Glycyl lysine isopeptide (Lys-Gly) (interchain with G-Cter in ubiquitin).

Belongs to the histone H2B family. The nucleosome is a histone octamer containing two molecules each of H2A, H2B, H3 and H4 assembled in one H3-H4 heterotetramer and two H2A-H2B heterodimers. The octamer wraps approximately 147 bp of DNA. Monoubiquitination of Lys-121 by BRE1 gives a specific tag for epigenetic transcriptional activation and is also prerequisite for histone H3 'Lys-4' and 'Lys-79' methylation. Post-translationally, phosphorylated on Ser-15 during developmentally programmed apoptosis; which may facilitate apoptotic chromatin condensation. In terms of processing, glcNAcylation at Ser-113 promotes monoubiquitination of Lys-121. It fluctuates in response to extracellular glucose, and associates with transcribed genes.

Its subcellular location is the nucleus. It is found in the chromosome. Its function is as follows. Core component of nucleosome. Nucleosomes wrap and compact DNA into chromatin, limiting DNA accessibility to the cellular machineries which require DNA as a template. Histones thereby play a central role in transcription regulation, DNA repair, DNA replication and chromosomal stability. DNA accessibility is regulated via a complex set of post-translational modifications of histones, also called histone code, and nucleosome remodeling. The polypeptide is Histone H2B 1.1 (Xenopus laevis (African clawed frog)).